We begin with the raw amino-acid sequence, 348 residues long: Dihydroorotase (348 aa).

Zn(2+)-binding residues include H17 and H19. Substrate contacts are provided by residues 19 to 21 and N45; that span reads HLR. Zn(2+) contacts are provided by K103, H140, and H178. K103 carries the post-translational modification N6-carboxylysine. Residue H140 coordinates substrate. L223 serves as a coordination point for substrate. Position 251 (D251) interacts with Zn(2+). The active site involves D251. The substrate site is built by H255 and A267.

Belongs to the metallo-dependent hydrolases superfamily. DHOase family. Class II DHOase subfamily. In terms of assembly, homodimer. The cofactor is Zn(2+).

The enzyme catalyses (S)-dihydroorotate + H2O = N-carbamoyl-L-aspartate + H(+). Its pathway is pyrimidine metabolism; UMP biosynthesis via de novo pathway; (S)-dihydroorotate from bicarbonate: step 3/3. Its function is as follows. Catalyzes the reversible cyclization of carbamoyl aspartate to dihydroorotate. The polypeptide is Dihydroorotase (Salmonella heidelberg (strain SL476)).